The primary structure comprises 125 residues: RutC family protein aq_364 (125 aa).

Belongs to the RutC family.

The polypeptide is RutC family protein aq_364 (Aquifex aeolicus (strain VF5)).